Consider the following 738-residue polypeptide: Pentatricopeptide repeat-containing protein At5g65570 (738 aa).

13 PPR repeats span residues 98–128, 129–163, 164–198, 200–230, 231–265, 266–300, 301–331, 332–366, 367–401, 402–432, 433–467, 468–502, and 503–537; these read AEIS…MSER, HIVT…NVLP, DEYT…GLEV, NVFV…VEEK, DVVL…KVQP, NEYT…GFES, ALAS…IEYP, NQVS…SIKP, NSFT…GFDR, DKYA…LSEV, DVIS…GLQP, NDVT…KIML, and TNDH…DLVL. The tract at residues 537–612 is type E motif; sequence LWRTLLSACK…NPAMSWVEIN (76 aa). Residues 613 to 644 are type E(+) motif; that stretch reads KETHTFMAGDLFSHPNSEQILENLEELIKKSK. Residues 645–738 form a type DYW motif region; that stretch reads DLGYVEDKSC…DGSCSCGDYW (94 aa).

This sequence belongs to the PPR family. PCMP-H subfamily.

The sequence is that of Pentatricopeptide repeat-containing protein At5g65570 (PCMP-H47) from Arabidopsis thaliana (Mouse-ear cress).